Here is a 257-residue protein sequence, read N- to C-terminus: DNA repair protein RecO (257 aa).

It belongs to the RecO family.

In terms of biological role, involved in DNA repair and RecF pathway recombination. The sequence is that of DNA repair protein RecO from Clostridium kluyveri (strain ATCC 8527 / DSM 555 / NBRC 12016 / NCIMB 10680 / K1).